The following is a 403-amino-acid chain: Coenzyme A biosynthesis bifunctional protein CoaBC (403 aa).

The phosphopantothenoylcysteine decarboxylase stretch occupies residues 1–197; that stretch reads MISEIMHPTK…GNNLKKEGNR (197 aa). Residues 198 to 403 form a phosphopantothenate--cysteine ligase region; that stretch reads VLILNGGTVE…VEKVKKLVKS (206 aa). 3 residues coordinate CTP: Asp-285, Lys-294, and Phe-327.

This sequence in the N-terminal section; belongs to the HFCD (homo-oligomeric flavin containing Cys decarboxylase) superfamily. The protein in the C-terminal section; belongs to the PPC synthetase family. As to quaternary structure, homododecamer. The CoaC domain is responsible for dodecamer formation. It depends on Mg(2+) as a cofactor. Requires FMN as cofactor.

It carries out the reaction N-[(R)-4-phosphopantothenoyl]-L-cysteine + H(+) = (R)-4'-phosphopantetheine + CO2. The catalysed reaction is (R)-4'-phosphopantothenate + L-cysteine + CTP = N-[(R)-4-phosphopantothenoyl]-L-cysteine + CMP + diphosphate + H(+). The protein operates within cofactor biosynthesis; coenzyme A biosynthesis. Its function is as follows. Catalyzes two sequential steps in the biosynthesis of coenzyme A. In the first step cysteine is conjugated to 4'-phosphopantothenate to form 4-phosphopantothenoylcysteine. In the second step the latter compound is decarboxylated to form 4'-phosphopantotheine. The protein is Coenzyme A biosynthesis bifunctional protein CoaBC of Methanocaldococcus jannaschii (strain ATCC 43067 / DSM 2661 / JAL-1 / JCM 10045 / NBRC 100440) (Methanococcus jannaschii).